The primary structure comprises 56 residues: Small ribosomal subunit protein uS14 (56 aa).

The protein belongs to the universal ribosomal protein uS14 family.

In Kluyveromyces lactis (strain ATCC 8585 / CBS 2359 / DSM 70799 / NBRC 1267 / NRRL Y-1140 / WM37) (Yeast), this protein is Small ribosomal subunit protein uS14 (RPS29).